The chain runs to 85 residues: Large ribosomal subunit protein bL27 (85 aa).

The interval Met-1 to Val-23 is disordered.

This sequence belongs to the bacterial ribosomal protein bL27 family.

This Thioalkalivibrio sulfidiphilus (strain HL-EbGR7) protein is Large ribosomal subunit protein bL27.